Consider the following 630-residue polypeptide: tRNA uridine 5-carboxymethylaminomethyl modification enzyme MnmG (630 aa).

13–18 (GGGHAG) provides a ligand contact to FAD. 273–287 (GPRYCPSIEDKIHRF) contributes to the NAD(+) binding site.

The protein belongs to the MnmG family. In terms of assembly, homodimer. Heterotetramer of two MnmE and two MnmG subunits. Requires FAD as cofactor.

It localises to the cytoplasm. Functionally, NAD-binding protein involved in the addition of a carboxymethylaminomethyl (cmnm) group at the wobble position (U34) of certain tRNAs, forming tRNA-cmnm(5)s(2)U34. This chain is tRNA uridine 5-carboxymethylaminomethyl modification enzyme MnmG, found in Pseudomonas entomophila (strain L48).